A 331-amino-acid chain; its full sequence is DNA-directed RNA polymerase subunit alpha (331 aa).

The alpha N-terminal domain (alpha-NTD) stretch occupies residues 1 to 226 (MLIAQRPTLT…ELFGLARELN (226 aa)). Positions 243–331 (LSSELSMPIE…SYDEDETTTN (89 aa)) are alpha C-terminal domain (alpha-CTD).

It belongs to the RNA polymerase alpha chain family. As to quaternary structure, homodimer. The RNAP catalytic core consists of 2 alpha, 1 beta, 1 beta' and 1 omega subunit. When a sigma factor is associated with the core the holoenzyme is formed, which can initiate transcription.

It catalyses the reaction RNA(n) + a ribonucleoside 5'-triphosphate = RNA(n+1) + diphosphate. Its function is as follows. DNA-dependent RNA polymerase catalyzes the transcription of DNA into RNA using the four ribonucleoside triphosphates as substrates. The sequence is that of DNA-directed RNA polymerase subunit alpha from Clavibacter michiganensis subsp. michiganensis (strain NCPPB 382).